Reading from the N-terminus, the 353-residue chain is Small ribosomal subunit biogenesis GTPase RsgA (353 aa).

The interval 1–24 (MSKNKLSKGQQRRVKANHQRRLKT) is disordered. Residues 10–23 (QQRRVKANHQRRLK) are compositionally biased toward basic residues. Residues 104 to 274 (ASVLTRPDFY…VIDSPGVREF (171 aa)) enclose the CP-type G domain. GTP contacts are provided by residues 160 to 163 (NKID) and 214 to 222 (GQSGVGKSS). Residues Cys-298, Cys-303, His-305, and Cys-311 each contribute to the Zn(2+) site.

The protein belongs to the TRAFAC class YlqF/YawG GTPase family. RsgA subfamily. Monomer. Associates with 30S ribosomal subunit, binds 16S rRNA. The cofactor is Zn(2+).

It localises to the cytoplasm. In terms of biological role, one of several proteins that assist in the late maturation steps of the functional core of the 30S ribosomal subunit. Helps release RbfA from mature subunits. May play a role in the assembly of ribosomal proteins into the subunit. Circularly permuted GTPase that catalyzes slow GTP hydrolysis, GTPase activity is stimulated by the 30S ribosomal subunit. The chain is Small ribosomal subunit biogenesis GTPase RsgA from Klebsiella pneumoniae subsp. pneumoniae (strain ATCC 700721 / MGH 78578).